Consider the following 182-residue polypeptide: MTTNSWHSILVIYLASLALDWSLEMGIHLEKSAYLALAGNFLRSNELSKVIDVVKEMVKSQHSLGVYHGAMLIHMLGFGRRPSLAAEALDLLPDDQKGLSAYTALMDVYISAGSPEKAMKILGEMREREIMPSLGTYDVLLSGLEKTSDFQRETSSLRKEQKSLVASTRFREIVHVEDKICM.

PPR repeat units follow at residues 30–64 (EKSAYLALAGNFLRSNELSKVIDVVKEMVKSQHSL), 65–95 (GVYHGAMLIHMLGFGRRPSLAAEALDLLPDD), and 98–132 (GLSAYTALMDVYISAGSPEKAMKILGEMREREIMP).

Belongs to the PPR family. P subfamily.

In Arabidopsis thaliana (Mouse-ear cress), this protein is Pentatricopeptide repeat-containing protein At2g01360.